The primary structure comprises 271 residues: 3-methyl-2-oxobutanoate hydroxymethyltransferase (271 aa).

Residues D44 and D83 each coordinate Mg(2+). Residues 44–45, D83, and K112 contribute to the 3-methyl-2-oxobutanoate site; that span reads DS. E114 serves as a coordination point for Mg(2+). The Proton acceptor role is filled by E181.

The protein belongs to the PanB family. In terms of assembly, homodecamer; pentamer of dimers. Requires Mg(2+) as cofactor.

It is found in the cytoplasm. It catalyses the reaction 3-methyl-2-oxobutanoate + (6R)-5,10-methylene-5,6,7,8-tetrahydrofolate + H2O = 2-dehydropantoate + (6S)-5,6,7,8-tetrahydrofolate. The protein operates within cofactor biosynthesis; coenzyme A biosynthesis. In terms of biological role, catalyzes the reversible reaction in which hydroxymethyl group from 5,10-methylenetetrahydrofolate is transferred onto alpha-ketoisovalerate to form ketopantoate. The chain is 3-methyl-2-oxobutanoate hydroxymethyltransferase from Staphylothermus marinus (strain ATCC 43588 / DSM 3639 / JCM 9404 / F1).